Here is a 451-residue protein sequence, read N- to C-terminus: Tubulin beta-1 chain (451 aa).

The MREI motif motif lies at 1 to 4 (MREI). GTP-binding residues include Q11, E69, S138, G142, T143, and G144. Residue E69 coordinates Mg(2+). S172 bears the Phosphoserine; by CDK1 mark. Residues N204 and N226 each coordinate GTP. The tract at residues 432 to 451 (LEEDEEVTEEAEMEPEDKGH) is disordered. A compositionally biased stretch (acidic residues) spans 433–451 (EEDEEVTEEAEMEPEDKGH). E440 bears the 5-glutamyl polyglutamate mark.

It belongs to the tubulin family. Dimer of alpha and beta chains. A typical microtubule is a hollow water-filled tube with an outer diameter of 25 nm and an inner diameter of 15 nM. Alpha-beta heterodimers associate head-to-tail to form protofilaments running lengthwise along the microtubule wall with the beta-tubulin subunit facing the microtubule plus end conferring a structural polarity. Microtubules usually have 13 protofilaments but different protofilament numbers can be found in some organisms and specialized cells. Interacts with RANBP10. The cofactor is Mg(2+). Some glutamate residues at the C-terminus are polyglutamylated, resulting in polyglutamate chains on the gamma-carboxyl group. Polyglutamylation plays a key role in microtubule severing by spastin (SPAST). SPAST preferentially recognizes and acts on microtubules decorated with short polyglutamate tails: severing activity by SPAST increases as the number of glutamates per tubulin rises from one to eight, but decreases beyond this glutamylation threshold. Glutamylation is also involved in cilia motility. Post-translationally, some glutamate residues at the C-terminus are monoglycylated but not polyglycylated due to the absence of functional TTLL10 in human. Monoglycylation is mainly limited to tubulin incorporated into cilia and flagella axonemes, which is required for their stability and maintenance. Flagella glycylation controls sperm motility. Both polyglutamylation and monoglycylation can coexist on the same protein on adjacent residues, and lowering glycylation levels increases polyglutamylation, and reciprocally. In terms of processing, phosphorylated on Ser-172 by CDK1 during the cell cycle, from metaphase to telophase, but not in interphase. This phosphorylation inhibits tubulin incorporation into microtubules. As to expression, hematopoietic cell-specific. Major isotype in leukocytes, where it represents 50% of all beta-tubulins.

The protein localises to the cytoplasm. It is found in the cytoskeleton. Tubulin is the major constituent of microtubules, a cylinder consisting of laterally associated linear protofilaments composed of alpha- and beta-tubulin heterodimers. Microtubules grow by the addition of GTP-tubulin dimers to the microtubule end, where a stabilizing cap forms. Below the cap, tubulin dimers are in GDP-bound state, owing to GTPase activity of alpha-tubulin. The protein is Tubulin beta-1 chain (TUBB1) of Homo sapiens (Human).